Consider the following 400-residue polypeptide: F-box/LRR-repeat protein 14 (400 aa).

The region spanning 2 to 48 (ETHISCLFPELLAMIFGYLDVRDKGRAAQVCTAWRDAAYHKSVWRGV) is the F-box domain. A required for down-regulation of SNAI1 region spans residues 2–48 (ETHISCLFPELLAMIFGYLDVRDKGRAAQVCTAWRDAAYHKSVWRGV). LRR repeat units follow at residues 144–163 (GLEV…GLLL), 170–191 (RLKS…GHLA), 203–225 (GLEQ…HISR), 229–250 (GLRL…LHLS), and 254–275 (SLRS…MHLA).

As to quaternary structure, part of a SCF (SKP1-cullin-F-box) ubiquitin-protein ligase complex. Interacts with SKP1 and CUL1. Interacts with SNAI1; the interaction requires the phosphorylation of the two serine residues in the substrate destruction motif D-S-G-X(2,3,4)-S.

The protein localises to the cytoplasm. Its function is as follows. Substrate-recognition component of some SCF (SKP1-CUL1-F-box protein)-type E3 ubiquitin-protein ligase complexes. The SCF(FBXL14) complex acts by mediating ubiquitination and subsequent degradation of SNAI1. The chain is F-box/LRR-repeat protein 14 (FBXL14) from Bos taurus (Bovine).